We begin with the raw amino-acid sequence, 212 residues long: Phosphatidylserine decarboxylase proenzyme (212 aa).

Ser182 (schiff-base intermediate with substrate; via pyruvic acid) is an active-site residue. Ser182 bears the Pyruvic acid (Ser); by autocatalysis mark.

It belongs to the phosphatidylserine decarboxylase family. PSD-A subfamily. As to quaternary structure, heterodimer of a large membrane-associated beta subunit and a small pyruvoyl-containing alpha subunit. The cofactor is pyruvate. In terms of processing, is synthesized initially as an inactive proenzyme. Formation of the active enzyme involves a self-maturation process in which the active site pyruvoyl group is generated from an internal serine residue via an autocatalytic post-translational modification. Two non-identical subunits are generated from the proenzyme in this reaction, and the pyruvate is formed at the N-terminus of the alpha chain, which is derived from the carboxyl end of the proenzyme. The post-translation cleavage follows an unusual pathway, termed non-hydrolytic serinolysis, in which the side chain hydroxyl group of the serine supplies its oxygen atom to form the C-terminus of the beta chain, while the remainder of the serine residue undergoes an oxidative deamination to produce ammonia and the pyruvoyl prosthetic group on the alpha chain.

It localises to the cell membrane. The catalysed reaction is a 1,2-diacyl-sn-glycero-3-phospho-L-serine + H(+) = a 1,2-diacyl-sn-glycero-3-phosphoethanolamine + CO2. The protein operates within phospholipid metabolism; phosphatidylethanolamine biosynthesis; phosphatidylethanolamine from CDP-diacylglycerol: step 2/2. Its function is as follows. Catalyzes the formation of phosphatidylethanolamine (PtdEtn) from phosphatidylserine (PtdSer). The protein is Phosphatidylserine decarboxylase proenzyme of Chlorobium luteolum (strain DSM 273 / BCRC 81028 / 2530) (Pelodictyon luteolum).